The chain runs to 127 residues: UPF0102 protein Mmar10_3014 (127 aa).

Belongs to the UPF0102 family.

The protein is UPF0102 protein Mmar10_3014 of Maricaulis maris (strain MCS10) (Caulobacter maris).